The sequence spans 298 residues: 4-diphosphocytidyl-2-C-methyl-D-erythritol kinase (298 aa).

The active site involves Lys-15. Residue 102-112 (PVAAGIGGGSS) participates in ATP binding. Asp-142 is a catalytic residue.

This sequence belongs to the GHMP kinase family. IspE subfamily.

The catalysed reaction is 4-CDP-2-C-methyl-D-erythritol + ATP = 4-CDP-2-C-methyl-D-erythritol 2-phosphate + ADP + H(+). It functions in the pathway isoprenoid biosynthesis; isopentenyl diphosphate biosynthesis via DXP pathway; isopentenyl diphosphate from 1-deoxy-D-xylulose 5-phosphate: step 3/6. Its function is as follows. Catalyzes the phosphorylation of the position 2 hydroxy group of 4-diphosphocytidyl-2C-methyl-D-erythritol. The polypeptide is 4-diphosphocytidyl-2-C-methyl-D-erythritol kinase (Hyphomonas neptunium (strain ATCC 15444)).